The following is a 164-amino-acid chain: UPF0304 protein HSM_1818 (164 aa).

This sequence belongs to the UPF0304 family.

The chain is UPF0304 protein HSM_1818 from Histophilus somni (strain 2336) (Haemophilus somnus).